Reading from the N-terminus, the 227-residue chain is MAYPLQLGFQDATSPVMEELLHFHDHTLMIIFLISSLVLYIIMLMLTTKLIHTNMMNVQEMEMIWTILPAIILILIALPSLHTLYMMDEINNPLLTIKTMGHQWFWSYEYTDYEDLAFDSYMITTDSLKFGELRLLEVDNRMVLPTDLPVRVLVSSEDVLHSWAVPSLGLKTDAIPGRLNQVTLTSMRPGLFYGQCSEICGANHSFMPIVLELVPLKYFESWSASLA.

Residues 1–14 (MAYPLQLGFQDATS) lie on the Mitochondrial intermembrane side of the membrane. The helical transmembrane segment at 15 to 45 (PVMEELLHFHDHTLMIIFLISSLVLYIIMLM) threads the bilayer. Residues 46-59 (LTTKLIHTNMMNVQ) are Mitochondrial matrix-facing. Residues 60-87 (EMEMIWTILPAIILILIALPSLHTLYMM) traverse the membrane as a helical segment. Residues 88 to 227 (DEINNPLLTI…YFESWSASLA (140 aa)) are Mitochondrial intermembrane-facing. Residues His161, Cys196, Glu198, Cys200, His204, and Met207 each coordinate Cu cation. Glu198 contacts Mg(2+). The residue at position 218 (Tyr218) is a Phosphotyrosine.

It belongs to the cytochrome c oxidase subunit 2 family. As to quaternary structure, component of the cytochrome c oxidase (complex IV, CIV), a multisubunit enzyme composed of 14 subunits. The complex is composed of a catalytic core of 3 subunits MT-CO1, MT-CO2 and MT-CO3, encoded in the mitochondrial DNA, and 11 supernumerary subunits COX4I, COX5A, COX5B, COX6A, COX6B, COX6C, COX7A, COX7B, COX7C, COX8 and NDUFA4, which are encoded in the nuclear genome. The complex exists as a monomer or a dimer and forms supercomplexes (SCs) in the inner mitochondrial membrane with NADH-ubiquinone oxidoreductase (complex I, CI) and ubiquinol-cytochrome c oxidoreductase (cytochrome b-c1 complex, complex III, CIII), resulting in different assemblies (supercomplex SCI(1)III(2)IV(1) and megacomplex MCI(2)III(2)IV(2)). Found in a complex with TMEM177, COA6, COX18, COX20, SCO1 and SCO2. Interacts with TMEM177 in a COX20-dependent manner. Interacts with COX20. Interacts with COX16. Cu cation serves as cofactor.

It localises to the mitochondrion inner membrane. It carries out the reaction 4 Fe(II)-[cytochrome c] + O2 + 8 H(+)(in) = 4 Fe(III)-[cytochrome c] + 2 H2O + 4 H(+)(out). Functionally, component of the cytochrome c oxidase, the last enzyme in the mitochondrial electron transport chain which drives oxidative phosphorylation. The respiratory chain contains 3 multisubunit complexes succinate dehydrogenase (complex II, CII), ubiquinol-cytochrome c oxidoreductase (cytochrome b-c1 complex, complex III, CIII) and cytochrome c oxidase (complex IV, CIV), that cooperate to transfer electrons derived from NADH and succinate to molecular oxygen, creating an electrochemical gradient over the inner membrane that drives transmembrane transport and the ATP synthase. Cytochrome c oxidase is the component of the respiratory chain that catalyzes the reduction of oxygen to water. Electrons originating from reduced cytochrome c in the intermembrane space (IMS) are transferred via the dinuclear copper A center (CU(A)) of subunit 2 and heme A of subunit 1 to the active site in subunit 1, a binuclear center (BNC) formed by heme A3 and copper B (CU(B)). The BNC reduces molecular oxygen to 2 water molecules using 4 electrons from cytochrome c in the IMS and 4 protons from the mitochondrial matrix. The sequence is that of Cytochrome c oxidase subunit 2 (MT-CO2) from Elephas maximus (Indian elephant).